Consider the following 340-residue polypeptide: MVDPIVTKNWRDLIKPRGLVVDQDSLSNTYGKFVAEPLERGFGITLGNSLRRVLLSSLQGAAITSVKVEGVEHEFMTIPEVAEDVTDIILNLKEVLLQIHTNDVKTIRIEADGPKEIKAGDLITDAQVEVLNPGHHILTISEGGRVRAEMTARRGRGYVPAERNKIPGSPIGTIPIDALFSPIRKVNYQVTNARVGQQTDYDKLTLEVWTDGSVAPADAVAFAAKIVKEQLSIFINFDEAEEPAEEIKPVEEQKLNENLFRSVDELELSVRSANCLQNANIKTIGDLVQKTEAEMLKTKNFGRKSLKEIKEILAEMGLSLGMKLENWPPKAAPQGGAPKV.

The alpha N-terminal domain (alpha-NTD) stretch occupies residues 1 to 238 (MVDPIVTKNW…EQLSIFINFD (238 aa)). The tract at residues 255–340 (LNENLFRSVD…AAPQGGAPKV (86 aa)) is alpha C-terminal domain (alpha-CTD).

Belongs to the RNA polymerase alpha chain family. As to quaternary structure, homodimer. The RNAP catalytic core consists of 2 alpha, 1 beta, 1 beta' and 1 omega subunit. When a sigma factor is associated with the core the holoenzyme is formed, which can initiate transcription.

It carries out the reaction RNA(n) + a ribonucleoside 5'-triphosphate = RNA(n+1) + diphosphate. DNA-dependent RNA polymerase catalyzes the transcription of DNA into RNA using the four ribonucleoside triphosphates as substrates. The protein is DNA-directed RNA polymerase subunit alpha of Anaeromyxobacter dehalogenans (strain 2CP-1 / ATCC BAA-258).